Consider the following 396-residue polypeptide: MAKAKFERTKPHCNIGTIGHVDHGKTSLTAAITKVLAETGGATFVDYANIDKAPEERERGITISTAHVEYETEQRHYAHVDCPGHADYVKNMITGAAQMDGGILVVSATDGPMPQTREHILLARQVGVPALVVFMNKVDLVDDAEILELVELEVRELLSSYEFPGDDIPVIKGSAVKALDGTNDEIGRNAVLELMAAVDSYIPQPERPLDKPFLMPIEDVFSISGRGTVVTGRVETGMVKVGEEVEIVGIKDTRKTTVTGVEMFRKLLDQGQAGDNIGALIRGVGREEVERGQVLAKPGSIKPHTDFSSEVYVLSKEEGGRHTPFFANYRPQFYFRTTDVTGTVELPEGTEMVMPGDNVKLGVKLIAPIAMEEGLRFSIREGGRTVGAGVVSSISK.

Residues 10–206 form the tr-type G domain; it reads KPHCNIGTIG…AVDSYIPQPE (197 aa). The segment at 19 to 26 is G1; sequence GHVDHGKT. 19–26 is a GTP binding site; that stretch reads GHVDHGKT. T26 is a Mg(2+) binding site. Residues 60–64 are G2; the sequence is GITIS. The interval 81 to 84 is G3; sequence DCPG. Residues 81–85 and 136–139 contribute to the GTP site; these read DCPGH and NKVD. A G4 region spans residues 136 to 139; sequence NKVD. The G5 stretch occupies residues 174–176; sequence SAV.

This sequence belongs to the TRAFAC class translation factor GTPase superfamily. Classic translation factor GTPase family. EF-Tu/EF-1A subfamily. As to quaternary structure, monomer.

Its subcellular location is the cytoplasm. The catalysed reaction is GTP + H2O = GDP + phosphate + H(+). In terms of biological role, GTP hydrolase that promotes the GTP-dependent binding of aminoacyl-tRNA to the A-site of ribosomes during protein biosynthesis. The chain is Elongation factor Tu from Rhizorhabdus wittichii (strain DSM 6014 / CCUG 31198 / JCM 15750 / NBRC 105917 / EY 4224 / RW1) (Sphingomonas wittichii).